The sequence spans 127 residues: Aspartate 1-decarboxylase (127 aa).

Catalysis depends on Ser25, which acts as the Schiff-base intermediate with substrate; via pyruvic acid. Ser25 bears the Pyruvic acid (Ser) mark. Thr57 serves as a coordination point for substrate. The active-site Proton donor is the Tyr58. Residue 73-75 (GAA) coordinates substrate.

This sequence belongs to the PanD family. Heterooctamer of four alpha and four beta subunits. Pyruvate is required as a cofactor. Is synthesized initially as an inactive proenzyme, which is activated by self-cleavage at a specific serine bond to produce a beta-subunit with a hydroxyl group at its C-terminus and an alpha-subunit with a pyruvoyl group at its N-terminus.

It is found in the cytoplasm. It catalyses the reaction L-aspartate + H(+) = beta-alanine + CO2. It participates in cofactor biosynthesis; (R)-pantothenate biosynthesis; beta-alanine from L-aspartate: step 1/1. In terms of biological role, catalyzes the pyruvoyl-dependent decarboxylation of aspartate to produce beta-alanine. The chain is Aspartate 1-decarboxylase from Neisseria meningitidis serogroup A / serotype 4A (strain DSM 15465 / Z2491).